Reading from the N-terminus, the 113-residue chain is Small ribosomal subunit protein bS6 (113 aa).

It belongs to the bacterial ribosomal protein bS6 family.

Its function is as follows. Binds together with bS18 to 16S ribosomal RNA. The polypeptide is Small ribosomal subunit protein bS6 (Vesicomyosocius okutanii subsp. Calyptogena okutanii (strain HA)).